Here is a 418-residue protein sequence, read N- to C-terminus: ORC1-type DNA replication protein 2 (418 aa).

Residues 72–76 (TGKTV), Tyr218, and Arg230 each bind ATP.

This sequence belongs to the CDC6/cdc18 family.

Involved in regulation of DNA replication. This chain is ORC1-type DNA replication protein 2 (cdc6-2), found in Sulfurisphaera tokodaii (strain DSM 16993 / JCM 10545 / NBRC 100140 / 7) (Sulfolobus tokodaii).